The following is a 211-amino-acid chain: Beta-crystallin B3 (211 aa).

At Met1 the chain carries N-acetylmethionine. The residue at position 2 (Ala2) is an N-acetylalanine; in Beta-crystallin B3, N-terminally processed. Residues 2–23 (AEQHSTPEQAAAGKSHGGLGGS) form an N-terminal arm region. 2 Beta/gamma crystallin 'Greek key' domains span residues 24–63 (YKVI…QVES) and 64–108 (GPWL…RPLH). Residues 109–113 (IDGPD) are connecting peptide. Beta/gamma crystallin 'Greek key' domains are found at residues 114-155 (HKLH…RAIN) and 156-198 (GTWV…RRIR). Residues 200-211 (QKWHKRGVFLSS) form a C-terminal arm region.

Belongs to the beta/gamma-crystallin family. As to quaternary structure, homo/heterodimer, or complexes of higher-order. The structure of beta-crystallin oligomers seems to be stabilized through interactions between the N-terminal arms.

Its function is as follows. Crystallins are the dominant structural components of the vertebrate eye lens. The polypeptide is Beta-crystallin B3 (CRYBB3) (Bos taurus (Bovine)).